The chain runs to 293 residues: MNAFDADITEHADSSGCHPLFRDVPATVEFNKLRKRLLRLTRQAIEDFAMVKPGDRWMVCLSGGKDSYGLLALLLDLKWRGLLPVELLAVNLDQGQPNFPKHILPDFLTRYGIEHRIEYQDTYSIVTDKLPETSTYCSLCSRLRRGNLYRIAREEGCSAIVLGHHREDILETFFMNLFHGGRLAAMPPKLLNDEGDLMVFRPLAYAAEDDLEKFANAMQFPIIPCDLCGSQDGLQRNAMKAMLIDIEKRMPGRKDTMIRALTNVRPSHLLDRKLFDFAGLMANGEKGSDDALW.

Residues 62–67 carry the PP-loop motif motif; it reads SGGKDS. The [4Fe-4S] cluster site is built by cysteine 137, cysteine 140, and cysteine 228.

This sequence belongs to the TtcA family. Homodimer. Mg(2+) serves as cofactor. It depends on [4Fe-4S] cluster as a cofactor.

The protein resides in the cytoplasm. It catalyses the reaction cytidine(32) in tRNA + S-sulfanyl-L-cysteinyl-[cysteine desulfurase] + AH2 + ATP = 2-thiocytidine(32) in tRNA + L-cysteinyl-[cysteine desulfurase] + A + AMP + diphosphate + H(+). It functions in the pathway tRNA modification. Its function is as follows. Catalyzes the ATP-dependent 2-thiolation of cytidine in position 32 of tRNA, to form 2-thiocytidine (s(2)C32). The sulfur atoms are provided by the cysteine/cysteine desulfurase (IscS) system. This is tRNA-cytidine(32) 2-sulfurtransferase from Brucella abortus (strain S19).